A 404-amino-acid chain; its full sequence is Double-stranded RNA-binding protein 5 (404 aa).

2 DRBM domains span residues 1 to 70 (MYKN…RLSL) and 87 to 155 (VYKN…SLKQ). 3 disordered regions span residues 195-236 (RRRR…STEE), 263-320 (GGRT…RRNA), and 336-362 (RRRP…FSDP). Low complexity predominate over residues 263–280 (GGRTQDTASPAPAAAAAS). The segment covering 302–316 (AGAHAARRHAARQGG) has biased composition (basic residues).

In terms of biological role, binds double-stranded RNA. This Oryza sativa subsp. japonica (Rice) protein is Double-stranded RNA-binding protein 5 (DRB5).